The primary structure comprises 297 residues: Non-homologous end-joining factor 1 (297 aa).

The interval 1–131 (MDARLLQLPW…ATVSTVCRHL (131 aa)) is globular head. A C-terminal tail region spans residues 220 to 286 (PKAPTHPKEE…LTHRPPAGAS (67 aa)). The segment at 222–297 (APTHPKEEDT…PKKKAKGLFM (76 aa)) is disordered. A compositionally biased stretch (polar residues) spans 232–255 (GNSASHRPMAESSSISFEKTVPTQ). Positions 263 to 286 (VSEPSQVPQSSVSCLTHRPPAGAS) are enriched in low complexity. The XLM signature appears at 287-297 (KPKKKAKGLFM). A compositionally biased stretch (basic residues) spans 287–297 (KPKKKAKGLFM).

Belongs to the XRCC4-XLF family. XLF subfamily. Homodimer. Interacts with xrcc4; the interaction is direct and is mediated via a head-to-head interaction between N-terminal head regions. Component of the core long-range non-homologous end joining (NHEJ) complex (also named DNA-PK complex) composed of prkdc/DNA-PKcs, lig4, xrcc4, xrcc6/Ku70, xrcc5/Ku80 and nhej1/xlf.

The protein localises to the nucleus. Functionally, DNA repair protein involved in DNA non-homologous end joining (NHEJ); required for double-strand break (DSB) repair and V(D)J recombination. It is also involved in telomere maintenance. Plays a key role in NHEJ by promoting the ligation of various mismatched and non-cohesive ends. In some studies, has been shown to associate with xrcc4 to form alternating helical filaments that bridge DNA and act like a bandage, holding together the broken DNA until it is repaired. Alternatively, it has also been shown that rather than forming filaments, a single nhej1 dimer interacts through both head domains with xrcc4 to promote the close alignment of DNA ends. The xrcc4-nhej1/xlf subcomplex binds to the DNA fragments of a DSB in a highly diffusive manner and robustly bridges two independent DNA molecules, holding the broken DNA fragments in close proximity to one other. The mobility of the bridges ensures that the ends remain accessible for further processing by other repair factors. The polypeptide is Non-homologous end-joining factor 1 (Xenopus laevis (African clawed frog)).